The sequence spans 377 residues: Erythronate-4-phosphate dehydrogenase (377 aa).

Ser-45 and Thr-67 together coordinate substrate. Residues Asp-147, 210 to 212 (ASR), and Asp-236 each bind NAD(+). Arg-212 is a catalytic residue. Glu-241 is an active-site residue. The active-site Proton donor is the His-258. NAD(+) is bound at residue Gly-261. Tyr-262 contacts substrate.

The protein belongs to the D-isomer specific 2-hydroxyacid dehydrogenase family. PdxB subfamily. In terms of assembly, homodimer.

Its subcellular location is the cytoplasm. It carries out the reaction 4-phospho-D-erythronate + NAD(+) = (R)-3-hydroxy-2-oxo-4-phosphooxybutanoate + NADH + H(+). It participates in cofactor biosynthesis; pyridoxine 5'-phosphate biosynthesis; pyridoxine 5'-phosphate from D-erythrose 4-phosphate: step 2/5. Functionally, catalyzes the oxidation of erythronate-4-phosphate to 3-hydroxy-2-oxo-4-phosphonooxybutanoate. This is Erythronate-4-phosphate dehydrogenase from Aeromonas salmonicida (strain A449).